Consider the following 425-residue polypeptide: Protein UL117 (425 aa).

A disordered region spans residues 59-83 (PTTTSSSLAPPRDDERRPTPPLRPP).

It belongs to the herpesviridae U84 family.

The protein resides in the host nucleus. In terms of biological role, plays a role in the inhibition of host DNA replication in the infected cell. Targets the mini-chromosome maintenance (MCM) complex and blocks the accumulation of MCM proteins and their loading onto host chromatin. This is Protein UL117 (UL117) from Homo sapiens (Human).